Here is a 504-residue protein sequence, read N- to C-terminus: Glucose-6-phosphate isomerase (504 aa).

Residue E333 is the Proton donor of the active site. Active-site residues include H364 and K473.

Belongs to the GPI family.

The protein resides in the cytoplasm. It catalyses the reaction alpha-D-glucose 6-phosphate = beta-D-fructose 6-phosphate. The protein operates within carbohydrate biosynthesis; gluconeogenesis. Its pathway is carbohydrate degradation; glycolysis; D-glyceraldehyde 3-phosphate and glycerone phosphate from D-glucose: step 2/4. Its function is as follows. Catalyzes the reversible isomerization of glucose-6-phosphate to fructose-6-phosphate. This chain is Glucose-6-phosphate isomerase, found in Xanthomonas oryzae pv. oryzae (strain KACC10331 / KXO85).